The chain runs to 142 residues: Sec-independent protein translocase protein TatB (142 aa).

Residues 2–22 traverse the membrane as a helical segment; the sequence is FANVGWGEMLVLVIAGLVILG. The tract at residues 89-142 is disordered; that stretch reads DDSIFTGKFDQNGKSEKPEQKPEKPQSAPGPAAAVPDQPAGGRSGSTPYDTDAT. Residues 99-112 are compositionally biased toward basic and acidic residues; sequence QNGKSEKPEQKPEK. Residues 133–142 show a composition bias toward polar residues; that stretch reads GSTPYDTDAT.

This sequence belongs to the TatB family. In terms of assembly, the Tat system comprises two distinct complexes: a TatABC complex, containing multiple copies of TatA, TatB and TatC subunits, and a separate TatA complex, containing only TatA subunits. Substrates initially bind to the TatABC complex, which probably triggers association of the separate TatA complex to form the active translocon.

The protein localises to the cell membrane. Functionally, part of the twin-arginine translocation (Tat) system that transports large folded proteins containing a characteristic twin-arginine motif in their signal peptide across membranes. Together with TatC, TatB is part of a receptor directly interacting with Tat signal peptides. TatB may form an oligomeric binding site that transiently accommodates folded Tat precursor proteins before their translocation. The sequence is that of Sec-independent protein translocase protein TatB from Mycolicibacterium vanbaalenii (strain DSM 7251 / JCM 13017 / BCRC 16820 / KCTC 9966 / NRRL B-24157 / PYR-1) (Mycobacterium vanbaalenii).